Here is a 471-residue protein sequence, read N- to C-terminus: Tyrosine--tRNA ligase (471 aa).

Tyrosine 41 contributes to the L-tyrosine binding site. Residues 46 to 55 (PTAPSLHVGN) carry the 'HIGH' region motif. The L-tyrosine site is built by tyrosine 176 and glutamine 180. Positions 236-240 (KFGKT) match the 'KMSKS' region motif. Lysine 239 is a binding site for ATP. The S4 RNA-binding domain maps to 403 to 471 (DLITHILQKV…GKKHLAAVFY (69 aa)).

Belongs to the class-I aminoacyl-tRNA synthetase family. TyrS type 1 subfamily. As to quaternary structure, homodimer.

It localises to the cytoplasm. It catalyses the reaction tRNA(Tyr) + L-tyrosine + ATP = L-tyrosyl-tRNA(Tyr) + AMP + diphosphate + H(+). Catalyzes the attachment of tyrosine to tRNA(Tyr) in a two-step reaction: tyrosine is first activated by ATP to form Tyr-AMP and then transferred to the acceptor end of tRNA(Tyr). In Tropheryma whipplei (strain Twist) (Whipple's bacillus), this protein is Tyrosine--tRNA ligase.